Reading from the N-terminus, the 398-residue chain is Lysophosphatidylserine lipase ABHD12 (398 aa).

A compositionally biased stretch (basic and acidic residues) spans 1 to 15; that stretch reads MRKRTEPVTLEHERC. Residues 1 to 24 are disordered; that stretch reads MRKRTEPVTLEHERCAASGSSSSG. The Cytoplasmic segment spans residues 1–74; it reads MRKRTEPVTL…RKSLWFRLRK (74 aa). The chain crosses the membrane as a helical span at residues 75 to 95; the sequence is ILLCVLGFYIAIPFLVKLCPG. Over 96–398 the chain is Extracellular; it reads IQAKLIFLNF…LGKSEPERQH (303 aa). N-linked (GlcNAc...) asparagine glycosylation is present at N123. The Nucleophile role is filled by S246. Active-site charge relay system residues include D333 and H372.

Belongs to the serine esterase family. Glycosylated.

The protein resides in the endoplasmic reticulum membrane. The protein localises to the mitochondrion. It carries out the reaction 1-(9Z-octadecenoyl)-sn-glycero-3-phospho-L-serine + H2O = sn-glycero-3-phospho-L-serine + (9Z)-octadecenoate + H(+). The catalysed reaction is 1-(9Z-octadecenoyl)-sn-glycero-3-phospho-(1'-sn-glycerol) + H2O = sn-glycero-3-phospho-(1'-sn-glycerol) + (9Z)-octadecenoate + H(+). It catalyses the reaction 1-(9Z-octadecenoyl)-sn-glycero-3-phospho-(1D-myo-inositol) + H2O = sn-glycero-3-phospho-1D-myo-inositol + (9Z)-octadecenoate + H(+). The enzyme catalyses 1-(9Z-octadecenoyl)-sn-glycero-3-phosphoethanolamine + H2O = sn-glycero-3-phosphoethanolamine + (9Z)-octadecenoate + H(+). It carries out the reaction 1-(9Z-octadecenoyl)-sn-glycero-3-phosphocholine + H2O = 1-(9Z-octadecenoyl)-sn-glycerol + phosphocholine + H(+). The catalysed reaction is 2-(9Z-octadecenoyl)-glycerol + H2O = glycerol + (9Z)-octadecenoate + H(+). It catalyses the reaction 1-hexadecanoyl-sn-glycero-3-phospho-L-serine + H2O = sn-glycero-3-phospho-L-serine + hexadecanoate + H(+). The enzyme catalyses 2-(5Z,8Z,11Z,14Z-eicosatetraenoyl)-glycerol + H2O = glycerol + (5Z,8Z,11Z,14Z)-eicosatetraenoate + H(+). It carries out the reaction Hydrolyzes glycerol monoesters of long-chain fatty acids.. The catalysed reaction is 1-decanoylglycerol + H2O = decanoate + glycerol + H(+). It catalyses the reaction 1-dodecanoylglycerol + H2O = dodecanoate + glycerol + H(+). The enzyme catalyses 1-tetradecanoylglycerol + H2O = tetradecanoate + glycerol + H(+). It carries out the reaction 2-hexadecanoylglycerol + H2O = glycerol + hexadecanoate + H(+). The catalysed reaction is 1-(9Z-octadecenoyl)-glycerol + H2O = glycerol + (9Z)-octadecenoate + H(+). It catalyses the reaction 2-(9Z,12Z-octadecadienoyl)-glycerol + H2O = (9Z,12Z)-octadecadienoate + glycerol + H(+). The enzyme catalyses 1-(5Z,8Z,11Z,14Z-eicosatetraenoyl)-glycerol + H2O = glycerol + (5Z,8Z,11Z,14Z)-eicosatetraenoate + H(+). It carries out the reaction 1-(9Z,12Z-octadecadienoyl)-glycerol + H2O = (9Z,12Z)-octadecadienoate + glycerol + H(+). The catalysed reaction is 1-hexadecanoylglycerol + H2O = glycerol + hexadecanoate + H(+). It catalyses the reaction 1-octadecanoylglycerol + H2O = octadecanoate + glycerol + H(+). The enzyme catalyses 1-octadecanoyl-2-(9,10-epoxyoctadecanoyl)-sn-glycero-3-phospho-L-serine + H2O = 9,10-epoxyoctadecanoate + 1-octadecanoyl-sn-glycero-3-phosphoserine + H(+). It carries out the reaction 1-octadecanoyl-2-(10-hydroxyoctadecanoyl)-sn-glycero-3-phospho-L-serine + H2O = 1-octadecanoyl-sn-glycero-3-phosphoserine + 10-hydroxyoctadecanoate + H(+). The catalysed reaction is 1-hexadecanoyl-2-(10-hydroxyoctadecanoyl)-sn-glycero-3-phospho-L-serine + H2O = 10-hydroxyoctadecanoate + 1-hexadecanoyl-sn-glycero-3-phospho-L-serine + H(+). Its activity is regulated as follows. Selectively inhibited by DO264 (N-3-pyridyl-N'-(1-[3-chloro-4-{2-chloro-4-(trifluoromethoxy)phenoxy}pyridine-2-yl]piperidin-4-yl)thiourea). In terms of biological role, lysophosphatidylserine (LPS) lipase that mediates the hydrolysis of lysophosphatidylserine, a class of signaling lipids that regulates immunological and neurological processes. Represents a major lysophosphatidylserine lipase in the brain, thereby playing a key role in the central nervous system. Also able to hydrolyze oxidized phosphatidylserine; oxidized phosphatidylserine is produced in response to severe inflammatory stress and constitutes a proapoptotic 'eat me' signal. Also has monoacylglycerol (MAG) lipase activity: hydrolyzes 2-arachidonoylglycerol (2-AG), thereby acting as a regulator of endocannabinoid signaling pathways. Has a strong preference for very-long-chain lipid substrates; substrate specificity is likely due to improved catalysis and not improved substrate binding. This Mus musculus (Mouse) protein is Lysophosphatidylserine lipase ABHD12.